The following is a 272-amino-acid chain: Elongation factor Ts (272 aa).

Positions 86–89 (TDFV) are involved in Mg(2+) ion dislocation from EF-Tu.

The protein belongs to the EF-Ts family.

It is found in the cytoplasm. In terms of biological role, associates with the EF-Tu.GDP complex and induces the exchange of GDP to GTP. It remains bound to the aminoacyl-tRNA.EF-Tu.GTP complex up to the GTP hydrolysis stage on the ribosome. This is Elongation factor Ts from Blochmanniella pennsylvanica (strain BPEN).